The primary structure comprises 439 residues: MSSRGKWSWLHSPITGGILLIIAATTALFWANLAPSLYHHAWHDALFSVSSGFSATIYSISLHQIVNEFLMAIFFFFIGLEMKRELLDDDLSTLKKAALPLFSALGGVVLPASIYYFFNAGTDTVNGWGIPMATDIAFALGVLAMVGSRVPLSLKIFLSALAIGDDLMAVLVIAIFYTEQIFVNELLVGFLGLIVLAVANKMGVRNRLVYYSIGLIIVWISFLASGVHATIAGVAVAFTIPSRREISMGNYLITAKGLLSGLDKERHNKADVLTKNAISSLREIRDLSYQASNPLQLKEEALHPISALFIVPLFALGNAGVIVDDSMLAELTNPIVLGIAAGLIIGKPLGIFLFAKLLTLLKLGQLPEGVTWRHIIGTGFLAGMGFTMSLFISDLAFSEPEQKIVAKVAVLLASIISGIVGYLILISAPVIKKDNKLNS.

11 helical membrane passes run 14–34 (ITGG…ANLA), 60–80 (ISLH…FIGL), 98–118 (ALPL…YYFF), 127–147 (GWGI…AMVG), 156–176 (IFLS…IAIF), 179–199 (EQIF…LAVA), 213–233 (IGLI…TIAG), 303–323 (HPIS…GVIV), 335–355 (IVLG…FLFA), 375–395 (IIGT…ISDL), and 408–428 (VAVL…LISA).

It belongs to the NhaA Na(+)/H(+) (TC 2.A.33) antiporter family.

The protein resides in the cell inner membrane. It carries out the reaction Na(+)(in) + 2 H(+)(out) = Na(+)(out) + 2 H(+)(in). Functionally, na(+)/H(+) antiporter that extrudes sodium in exchange for external protons. This Psychromonas ingrahamii (strain DSM 17664 / CCUG 51855 / 37) protein is Na(+)/H(+) antiporter NhaA 1.